The following is an 89-amino-acid chain: Sec translocon accessory complex subunit YrbF (89 aa).

Residues 4-24 traverse the membrane as a helical segment; it reads GTLGTLVPIILMFAVLYFLLI.

The protein belongs to the YajC family. In terms of assembly, part of the SecDF-YidC-YajC translocase complex. The SecDF-YidC-YajC translocase forms a supercomplex with SecYEG, called the holo-translocon (HTL).

The protein resides in the cell membrane. Its function is as follows. The SecYEG-SecDF-YajC-YidC holo-translocon (HTL) protein secretase/insertase is a supercomplex required for protein secretion, insertion of proteins into membranes, and assembly of membrane protein complexes. While the SecYEG complex is essential for assembly of a number of proteins and complexes, the SecDF-YajC-YidC subcomplex facilitates these functions. The sequence is that of Sec translocon accessory complex subunit YrbF (yrbF) from Bacillus subtilis (strain 168).